Here is a 63-residue protein sequence, read N- to C-terminus: Translational regulator CsrA (63 aa).

It belongs to the CsrA/RsmA family. In terms of assembly, homodimer; the beta-strands of each monomer intercalate to form a hydrophobic core, while the alpha-helices form wings that extend away from the core.

It localises to the cytoplasm. Its function is as follows. A key translational regulator that binds mRNA to regulate translation initiation and/or mRNA stability. Mediates global changes in gene expression, shifting from rapid growth to stress survival by linking envelope stress, the stringent response and the catabolite repression systems. Usually binds in the 5'-UTR; binding at or near the Shine-Dalgarno sequence prevents ribosome-binding, repressing translation, binding elsewhere in the 5'-UTR can activate translation and/or stabilize the mRNA. Its function is antagonized by small RNA(s). The chain is Translational regulator CsrA from Haemophilus influenzae (strain 86-028NP).